A 62-amino-acid chain; its full sequence is Large ribosomal subunit protein eL37 (62 aa).

Zn(2+) contacts are provided by Cys20, Cys23, Cys35, and Cys38. Residues 20–38 form a C4-type zinc finger; it reads CRRCGRRSYNVAKGYCAAC.

It belongs to the eukaryotic ribosomal protein eL37 family. It depends on Zn(2+) as a cofactor.

Its function is as follows. Binds to the 23S rRNA. The chain is Large ribosomal subunit protein eL37 (rpl37e) from Aeropyrum pernix (strain ATCC 700893 / DSM 11879 / JCM 9820 / NBRC 100138 / K1).